The following is a 530-amino-acid chain: Autoinducer-2 kinase (530 aa).

Belongs to the FGGY kinase family.

Its subcellular location is the cytoplasm. It catalyses the reaction (S)-4,5-dihydroxypentane-2,3-dione + ATP = (2S)-2-hydroxy-3,4-dioxopentyl phosphate + ADP + H(+). In terms of biological role, catalyzes the phosphorylation of autoinducer-2 (AI-2) to phospho-AI-2, which subsequently inactivates the transcriptional regulator LsrR and leads to the transcription of the lsr operon. Phosphorylates the ring-open form of (S)-4,5-dihydroxypentane-2,3-dione (DPD), which is the precursor to all AI-2 signaling molecules, at the C5 position. This is Autoinducer-2 kinase from Escherichia coli O9:H4 (strain HS).